Here is a 189-residue protein sequence, read N- to C-terminus: Large ribosomal subunit protein uL5 (189 aa).

This sequence belongs to the universal ribosomal protein uL5 family. In terms of assembly, part of the 50S ribosomal subunit; part of the 5S rRNA/L5/L18/L25 subcomplex. Contacts the 5S rRNA and the P site tRNA. Forms a bridge to the 30S subunit in the 70S ribosome.

Its function is as follows. This is one of the proteins that bind and probably mediate the attachment of the 5S RNA into the large ribosomal subunit, where it forms part of the central protuberance. In the 70S ribosome it contacts protein S13 of the 30S subunit (bridge B1b), connecting the 2 subunits; this bridge is implicated in subunit movement. Contacts the P site tRNA; the 5S rRNA and some of its associated proteins might help stabilize positioning of ribosome-bound tRNAs. The chain is Large ribosomal subunit protein uL5 from Corynebacterium jeikeium (strain K411).